We begin with the raw amino-acid sequence, 305 residues long: 4-diphosphocytidyl-2-C-methyl-D-erythritol kinase (305 aa).

Residue K15 is part of the active site. ATP is bound at residue 99-109 (PMGGGIGGGSS). Residue D141 is part of the active site.

The protein belongs to the GHMP kinase family. IspE subfamily.

The catalysed reaction is 4-CDP-2-C-methyl-D-erythritol + ATP = 4-CDP-2-C-methyl-D-erythritol 2-phosphate + ADP + H(+). Its pathway is isoprenoid biosynthesis; isopentenyl diphosphate biosynthesis via DXP pathway; isopentenyl diphosphate from 1-deoxy-D-xylulose 5-phosphate: step 3/6. Functionally, catalyzes the phosphorylation of the position 2 hydroxy group of 4-diphosphocytidyl-2C-methyl-D-erythritol. In Marinomonas sp. (strain MWYL1), this protein is 4-diphosphocytidyl-2-C-methyl-D-erythritol kinase.